We begin with the raw amino-acid sequence, 458 residues long: Ammonium transporter Rh type B (458 aa).

The Cytoplasmic portion of the chain corresponds to 1–13 (MAKSPRRVAGRRL). A helical membrane pass occupies residues 14–34 (LLPLLCLFFQGATAILFAIFV). At 35–61 (RYDQQTDAALWHGGNHSNADNEFYFRY) the chain is on the extracellular side. An N-linked (GlcNAc...) asparagine glycan is attached at Asn-49. A helical transmembrane segment spans residues 62–82 (PSFQDVHAMVFVGFGFLMVFL). The Cytoplasmic segment spans residues 83 to 86 (QRYG). A helical membrane pass occupies residues 87–107 (YSSLGFTFLLGAFALQWATLV). Over 108–124 (QGFLHSFHGGHIHVGME) the chain is Extracellular. Residues 125–145 (SLINADFCAGAVLISFGAVLG) form a helical membrane-spanning segment. At 146–149 (KTGP) the chain is on the cytoplasmic side. Residues 150–170 (AQLLLMALLEVALFGLNEFVL) traverse the membrane as a helical segment. Over 171–178 (LCLLGVRD) the chain is Extracellular. A helical membrane pass occupies residues 179-201 (AGGSMTIHTFGAYFGLVLSRVLY). The Cytoplasmic segment spans residues 202 to 219 (RPHLEKSQHRQGSVYHSD). The chain crosses the membrane as a helical span at residues 220–240 (LFAMIGTIFLWIFWPSFNSAL). Residues 241 to 251 (TSRGDGQPRTA) lie on the Extracellular side of the membrane. A helical membrane pass occupies residues 252–272 (LNTYYSLTASTLSTFALSALV). Over 273–282 (GKDGRLDMVH) the chain is Cytoplasmic. A helical membrane pass occupies residues 283-303 (VQNAALAGGVVVGTASEMMLT). Residue Pro-304 is a topological domain, extracellular. A helical transmembrane segment spans residues 305-325 (FGALAAGCLAGAISTLGYKFF). The Cytoplasmic segment spans residues 326–346 (TPILESKLKIQDTCGVHNLHG). The helical transmembrane segment at 347–367 (MPGVLGALLGALMTGLTTHEA) threads the bilayer. Residues 368 to 393 (YGDGLQSVFPLIAEGQRSATSQAIYQ) are Extracellular-facing. A helical membrane pass occupies residues 394-414 (LFGLSVTLLFASAGGVLGGLL). The Cytoplasmic segment spans residues 415–458 (LKLPFLDAPPDSQCYEDQMCWEVPGEHGYEAQEALRVEEPDTEA). The segment at 416 to 424 (KLPFLDAPP) is interaction with ANK3. Residues 429-432 (YEDQ) carry the Basolateral sorting signal motif.

This sequence belongs to the ammonium transporter (TC 2.A.49) family. Rh subfamily. As to quaternary structure, interacts (via C-terminus) with ANK2 and ANK3; required for targeting to the basolateral membrane. Post-translationally, N-glycosylated.

It is found in the cell membrane. Its subcellular location is the basolateral cell membrane. It carries out the reaction NH4(+)(in) = NH4(+)(out). It catalyses the reaction methylamine(out) = methylamine(in). The enzyme catalyses CO2(out) = CO2(in). Ammonium transporter involved in the maintenance of acid-base homeostasis. Transports ammonium and its related derivative methylammonium across the basolateral plasma membrane of epithelial cells likely contributing to renal transepithelial ammonia transport and ammonia metabolism. May transport either NH4(+) or NH3 ammonia species predominantly mediating an electrogenic NH4(+) transport. May act as a CO2 channel providing for renal acid secretion. This is Ammonium transporter Rh type B (RHBG) from Oryctolagus cuniculus (Rabbit).